A 575-amino-acid polypeptide reads, in one-letter code: Probable cytochrome P450 514A1 (575 aa).

A helical membrane pass occupies residues 4–24; sequence IFTIILTITILVLSLILKDLL. Cys-448 contributes to the heme binding site.

It belongs to the cytochrome P450 family. Requires heme as cofactor.

It localises to the membrane. The protein is Probable cytochrome P450 514A1 (cyp514A1) of Dictyostelium discoideum (Social amoeba).